Consider the following 404-residue polypeptide: Cysteine desulfurase IscS (404 aa).

Residues 75–76 (AT), Asn-155, Gln-183, and 203–205 (SAH) each bind pyridoxal 5'-phosphate. At Lys-206 the chain carries N6-(pyridoxal phosphate)lysine. Thr-243 lines the pyridoxal 5'-phosphate pocket. The Cysteine persulfide intermediate role is filled by Cys-328. Cys-328 contributes to the [2Fe-2S] cluster binding site.

This sequence belongs to the class-V pyridoxal-phosphate-dependent aminotransferase family. NifS/IscS subfamily. In terms of assembly, homodimer. Forms a heterotetramer with IscU, interacts with other sulfur acceptors. The cofactor is pyridoxal 5'-phosphate.

The protein resides in the cytoplasm. The enzyme catalyses (sulfur carrier)-H + L-cysteine = (sulfur carrier)-SH + L-alanine. It participates in cofactor biosynthesis; iron-sulfur cluster biosynthesis. Its function is as follows. Master enzyme that delivers sulfur to a number of partners involved in Fe-S cluster assembly, tRNA modification or cofactor biosynthesis. Catalyzes the removal of elemental sulfur atoms from cysteine to produce alanine. Functions as a sulfur delivery protein for Fe-S cluster synthesis onto IscU, an Fe-S scaffold assembly protein, as well as other S acceptor proteins. The polypeptide is Cysteine desulfurase IscS (Stutzerimonas stutzeri (strain A1501) (Pseudomonas stutzeri)).